Reading from the N-terminus, the 271-residue chain is Formamidopyrimidine-DNA glycosylase (271 aa).

Residue Pro-2 is the Schiff-base intermediate with DNA of the active site. Glu-3 acts as the Proton donor in catalysis. Lys-57 (proton donor; for beta-elimination activity) is an active-site residue. Positions 90, 109, and 151 each coordinate DNA. The FPG-type zinc-finger motif lies at 236 to 270; that stretch reads HVYGRGGETCTQCGNLLSEIRLGQRTTVFCSICQP. Arg-260 serves as the catalytic Proton donor; for delta-elimination activity.

It belongs to the FPG family. As to quaternary structure, monomer. Zn(2+) is required as a cofactor.

The enzyme catalyses Hydrolysis of DNA containing ring-opened 7-methylguanine residues, releasing 2,6-diamino-4-hydroxy-5-(N-methyl)formamidopyrimidine.. It catalyses the reaction 2'-deoxyribonucleotide-(2'-deoxyribose 5'-phosphate)-2'-deoxyribonucleotide-DNA = a 3'-end 2'-deoxyribonucleotide-(2,3-dehydro-2,3-deoxyribose 5'-phosphate)-DNA + a 5'-end 5'-phospho-2'-deoxyribonucleoside-DNA + H(+). Involved in base excision repair of DNA damaged by oxidation or by mutagenic agents. Acts as a DNA glycosylase that recognizes and removes damaged bases. Has a preference for oxidized purines, such as 7,8-dihydro-8-oxoguanine (8-oxoG). Has AP (apurinic/apyrimidinic) lyase activity and introduces nicks in the DNA strand. Cleaves the DNA backbone by beta-delta elimination to generate a single-strand break at the site of the removed base with both 3'- and 5'-phosphates. This is Formamidopyrimidine-DNA glycosylase from Shewanella oneidensis (strain ATCC 700550 / JCM 31522 / CIP 106686 / LMG 19005 / NCIMB 14063 / MR-1).